Here is a 367-residue protein sequence, read N- to C-terminus: MTSRNYLLLTPGPLTTSRTVKEAMLFDSCTWDDDYNIGVVEQIRQQLTALATASEGYTSVLLQGSGSYAVEAVLGSALGPQDKVLIVSNGAYGARMVEMAGLMGIAHHAYDCGEVARPDVQAIDAILNADPTISHIAMVHSETTTGMLNPIDEVGALAHRYGKTYIVDAMSSFGGIPMDIAALHIDYLISSANKCIQGVPGFAFVIAREQKLAACKGRSRSLSLDLYAQWRCMEDNHGKWRFTSPTHTVLAFAQALKELAEEGGVAARHQRYQQNQRSLVAGMRALGFNTLLDDELHSPIITAFYSPEDPQYRFSEFYRRLKEQGFVIYPGKVSQSDCFRIGNIGEVYAADITALLTAIRTAMYWTK.

Lys194 is subject to N6-(pyridoxal phosphate)lysine.

It belongs to the class-V pyridoxal-phosphate-dependent aminotransferase family. PhnW subfamily. Homodimer. Pyridoxal 5'-phosphate is required as a cofactor.

It carries out the reaction (2-aminoethyl)phosphonate + pyruvate = phosphonoacetaldehyde + L-alanine. Its function is as follows. Involved in phosphonate degradation. The protein is 2-aminoethylphosphonate--pyruvate transaminase of Salmonella schwarzengrund (strain CVM19633).